The following is a 569-amino-acid chain: Dicarboxylate transporter 1, chloroplastic (569 aa).

The transit peptide at methionine 1–proline 93 directs the protein to the chloroplast. Residues serine 23–proline 74 show a composition bias toward low complexity. The interval serine 23–proline 93 is disordered. The segment covering threonine 75–valine 90 has biased composition (pro residues). A run of 12 helical transmembrane segments spans residues proline 106 to valine 126, leucine 134 to valine 154, alanine 172 to alanine 192, alanine 241 to glycine 261, leucine 268 to leucine 288, alanine 317 to tyrosine 337, isoleucine 367 to valine 387, aspartate 388 to tryptophan 408, tryptophan 423 to phenylalanine 443, valine 450 to phenylalanine 470, phenylalanine 490 to phenylalanine 510, and tyrosine 543 to tryptophan 563.

Belongs to the SLC13A/DASS transporter (TC 2.A.47) family. DIT1 subfamily. As to quaternary structure, monomer. Post-translationally, the N-terminus is blocked. Expressed in leaves.

It is found in the plastid. Its subcellular location is the chloroplast inner membrane. Functionally, 2-oxoglutarate/malate translocator that transports carbon skeletons into chloroplasts for net glutamate synthesis. This translocator exchanges malate for internal succinate, fumarate and 2-oxoglutarate but not for aspartate and glutamate. Involved with DIT2 in primary ammonia assimilation and in the re-assimilation of ammonia generated by the photorespiratory pathway. Imports 2-oxoglutarate into plastids as precursor for ammonia assimilation. 2-oxoglutarate is converted to glutamate, the end product of ammonia assimilation, which is exported to the cytosol by DIT2. This chain is Dicarboxylate transporter 1, chloroplastic (DIT1), found in Spinacia oleracea (Spinach).